The chain runs to 347 residues: 3-methyl-2-oxobutanoate hydroxymethyltransferase 1, mitochondrial (347 aa).

The transit peptide at Met1–Arg48 directs the protein to the mitochondrion. Positions 83 and 122 each coordinate Mg(2+). 3-methyl-2-oxobutanoate is bound by residues Asp83–Ser84, Asp122, and Lys152. Mg(2+) is bound at residue Glu154. The active-site Proton acceptor is the Glu222.

This sequence belongs to the PanB family. It depends on Mg(2+) as a cofactor.

It localises to the mitochondrion. The catalysed reaction is 3-methyl-2-oxobutanoate + (6R)-5,10-methylene-5,6,7,8-tetrahydrofolate + H2O = 2-dehydropantoate + (6S)-5,6,7,8-tetrahydrofolate. It participates in cofactor biosynthesis; (R)-pantothenate biosynthesis; (R)-pantoate from 3-methyl-2-oxobutanoate: step 1/2. Catalyzes the reversible reaction in which hydroxymethyl group from 5,10-methylenetetrahydrofolate is transferred onto alpha-ketoisovalerate to form ketopantoate. The polypeptide is 3-methyl-2-oxobutanoate hydroxymethyltransferase 1, mitochondrial (KPHMT1) (Arabidopsis thaliana (Mouse-ear cress)).